The following is a 65-amino-acid chain: Large ribosomal subunit protein uL29 (65 aa).

This sequence belongs to the universal ribosomal protein uL29 family.

The sequence is that of Large ribosomal subunit protein uL29 (rpmC) from Buchnera aphidicola subsp. Acyrthosiphon pisum (strain APS) (Acyrthosiphon pisum symbiotic bacterium).